The following is a 164-amino-acid chain: Phosphopantetheine adenylyltransferase (164 aa).

T10 is a substrate binding site. ATP contacts are provided by residues 10 to 11 and H18; that span reads TF. Substrate is bound by residues K42, T79, and R93. ATP contacts are provided by residues 94 to 96, E104, and 129 to 135; these read GLR and NQIISSR.

This sequence belongs to the bacterial CoaD family. As to quaternary structure, homohexamer. Requires Mg(2+) as cofactor.

It localises to the cytoplasm. It carries out the reaction (R)-4'-phosphopantetheine + ATP + H(+) = 3'-dephospho-CoA + diphosphate. It functions in the pathway cofactor biosynthesis; coenzyme A biosynthesis; CoA from (R)-pantothenate: step 4/5. In terms of biological role, reversibly transfers an adenylyl group from ATP to 4'-phosphopantetheine, yielding dephospho-CoA (dPCoA) and pyrophosphate. In Pelagibacter ubique (strain HTCC1062), this protein is Phosphopantetheine adenylyltransferase.